The primary structure comprises 418 residues: Gamma-glutamyl phosphate reductase (418 aa).

The protein belongs to the gamma-glutamyl phosphate reductase family.

It localises to the cytoplasm. The catalysed reaction is L-glutamate 5-semialdehyde + phosphate + NADP(+) = L-glutamyl 5-phosphate + NADPH + H(+). The protein operates within amino-acid biosynthesis; L-proline biosynthesis; L-glutamate 5-semialdehyde from L-glutamate: step 2/2. In terms of biological role, catalyzes the NADPH-dependent reduction of L-glutamate 5-phosphate into L-glutamate 5-semialdehyde and phosphate. The product spontaneously undergoes cyclization to form 1-pyrroline-5-carboxylate. This chain is Gamma-glutamyl phosphate reductase, found in Geobacter sp. (strain M21).